The following is a 253-amino-acid chain: Octanoyltransferase (253 aa).

The BPL/LPL catalytic domain occupies 47–236 (PETPDQVWLV…ALCEVLAARE (190 aa)). Substrate contacts are provided by residues 87–94 (RGGQITYH), 159–161 (ALG), and 172–174 (GVS). Residue Cys-190 is the Acyl-thioester intermediate of the active site.

This sequence belongs to the LipB family.

It is found in the cytoplasm. It catalyses the reaction octanoyl-[ACP] + L-lysyl-[protein] = N(6)-octanoyl-L-lysyl-[protein] + holo-[ACP] + H(+). Its pathway is protein modification; protein lipoylation via endogenous pathway; protein N(6)-(lipoyl)lysine from octanoyl-[acyl-carrier-protein]: step 1/2. In terms of biological role, catalyzes the transfer of endogenously produced octanoic acid from octanoyl-acyl-carrier-protein onto the lipoyl domains of lipoate-dependent enzymes. Lipoyl-ACP can also act as a substrate although octanoyl-ACP is likely to be the physiological substrate. This chain is Octanoyltransferase, found in Cupriavidus pinatubonensis (strain JMP 134 / LMG 1197) (Cupriavidus necator (strain JMP 134)).